The chain runs to 486 residues: Maintenance of mitochondrial morphology protein 1 (486 aa).

The Lumenal portion of the chain corresponds to 1–23 (MSQHSQYDAPGVPVQPSLSFTQG). The chain crosses the membrane as a helical span at residues 24–44 (FLLGQLSVVLLIGAFIKFFIF). At 45–486 (GEAPAPPSRG…PGSMPGGRAQ (442 aa)) the chain is on the cytoplasmic side. A disordered region spans residues 52-103 (SRGLASRTASHHRSYSINQGDNNVSNNNTSGGSPRTLCEKPSTSNVLRPVPS). Low complexity predominate over residues 67-84 (SINQGDNNVSNNNTSGGS). Over residues 92 to 103 (PSTSNVLRPVPS) the composition is skewed to polar residues. The 250-residue stretch at 140–389 (QPESLDWFNV…EPRVQVVGLP (250 aa)) folds into the SMP-LTD domain. Over residues 413-426 (AAASASSRGGAPEA) the composition is skewed to low complexity. The disordered stretch occupies residues 413–486 (AAASASSRGG…PGSMPGGRAQ (74 aa)).

It belongs to the MMM1 family. Homodimer. Component of the ER-mitochondria encounter structure (ERMES) or MDM complex, composed of mmm1, mdm10, mdm12 and mdm34. A mmm1 homodimer associates with one molecule of mdm12 on each side in a pairwise head-to-tail manner, and the SMP-LTD domains of mmm1 and mdm12 generate a continuous hydrophobic tunnel for phospholipid trafficking.

The protein resides in the endoplasmic reticulum membrane. In terms of biological role, component of the ERMES/MDM complex, which serves as a molecular tether to connect the endoplasmic reticulum (ER) and mitochondria. Components of this complex are involved in the control of mitochondrial shape and protein biogenesis, and function in nonvesicular lipid trafficking between the ER and mitochondria. The mdm12-mmm1 subcomplex functions in the major beta-barrel assembly pathway that is responsible for biogenesis of all outer membrane beta-barrel proteins, and acts in a late step after the SAM complex. The mdm10-mdm12-mmm1 subcomplex further acts in the TOM40-specific pathway after the action of the mdm12-mmm1 complex. Essential for establishing and maintaining the structure of mitochondria and maintenance of mtDNA nucleoids. The sequence is that of Maintenance of mitochondrial morphology protein 1 from Talaromyces marneffei (strain ATCC 18224 / CBS 334.59 / QM 7333) (Penicillium marneffei).